Reading from the N-terminus, the 139-residue chain is Hydrogenase maturation factor HypA (139 aa).

Position 2 (H2) interacts with Ni(2+). Positions 73, 76, 110, and 113 each coordinate Zn(2+).

The protein belongs to the HypA/HybF family.

In terms of biological role, involved in the maturation of [NiFe] hydrogenases. Required for nickel insertion into the metal center of the hydrogenase. This chain is Hydrogenase maturation factor HypA, found in Pyrococcus horikoshii (strain ATCC 700860 / DSM 12428 / JCM 9974 / NBRC 100139 / OT-3).